The chain runs to 100 residues: Toxin Rv0299 (100 aa).

Toxic component of a type II toxin-antitoxin (TA) system. Upon expression in M.smegmatis inhibits colony formation. Its toxic effect is neutralized by coexpression with cognate antitoxin Rv0298/MT0312. This chain is Toxin Rv0299, found in Mycobacterium tuberculosis (strain ATCC 25618 / H37Rv).